The sequence spans 505 residues: COMPASS component BRE2 (505 aa).

One can recognise a B30.2/SPRY domain in the interval 70 to 295; sequence SANPFFTILG…LKQETTNKEF (226 aa). Phosphoserine is present on serine 227. Residues 271–290 form a disordered region; that stretch reads EPWREDAENGPSRKKLKQET. Lysine 318 serves as a coordination point for DNA. The interval 398–420 is disordered; sequence RDESNDKNTTSAKKKKQQQKKKK. Residues 409–420 show a composition bias toward basic residues; it reads AKKKKQQQKKKK.

The protein belongs to the cclA family. As to quaternary structure, component of the Set1C/COMPASS complex which consists of SET1(2), BRE2(2), SPP1(2), SDC1(1), SHG1(1), SWD1(1), SWD2(1), and SWD3(1). Interacts directly with SDC1.

The protein resides in the nucleus. It is found in the chromosome. It localises to the telomere. In terms of biological role, component of the Set1C/COMPASS complex that specifically mono-, di- and trimethylates histone H3 to form H3K4me1/2/3, which subsequently plays a role in telomere length maintenance and transcription elongation regulation. COMPASS recognizes ubiquitinated H2B on one face of the nucleosome which stimulates the methylation of H3 on the opposing face. This chain is COMPASS component BRE2, found in Saccharomyces cerevisiae (strain ATCC 204508 / S288c) (Baker's yeast).